We begin with the raw amino-acid sequence, 448 residues long: Probable ribonuclease FAU-1 (448 aa).

It belongs to the FAU-1 family.

Probable RNase involved in rRNA stability through maturation and/or degradation of precursor rRNAs. Binds to RNA in loop regions with AU-rich sequences. In Pyrobaculum calidifontis (strain DSM 21063 / JCM 11548 / VA1), this protein is Probable ribonuclease FAU-1.